Reading from the N-terminus, the 132-residue chain is Small ribosomal subunit protein bS16 (132 aa).

Basic and acidic residues predominate over residues 82–107 (DSKVQSKKEHNANKVKKEVKKPEAKK). The interval 82-132 (DSKVQSKKEHNANKVKKEVKKPEAKKAAASKPASKPSASKSASQKKTVSKK) is disordered. Positions 108–132 (AAASKPASKPSASKSASQKKTVSKK) are enriched in low complexity.

It belongs to the bacterial ribosomal protein bS16 family.

This is Small ribosomal subunit protein bS16 from Malacoplasma penetrans (strain HF-2) (Mycoplasma penetrans).